Reading from the N-terminus, the 175-residue chain is Co-chaperone protein HscB homolog (175 aa).

The region spanning 7–79 is the J domain; it reads SHFDLFDLPA…LKRATYLLHL (73 aa).

Belongs to the HscB family. As to quaternary structure, interacts with HscA and stimulates its ATPase activity.

Its function is as follows. Co-chaperone involved in the maturation of iron-sulfur cluster-containing proteins. Seems to help targeting proteins to be folded toward HscA. This is Co-chaperone protein HscB homolog from Paraburkholderia phytofirmans (strain DSM 17436 / LMG 22146 / PsJN) (Burkholderia phytofirmans).